The primary structure comprises 1040 residues: Multidrug resistance protein MdtB (1040 aa).

A run of 12 helical transmembrane segments spans residues 16 to 36, 347 to 367, 369 to 389, 396 to 416, 440 to 460, 472 to 492, 537 to 557, 863 to 883, 888 to 908, 911 to 931, 968 to 988, and 998 to 1018; these read FIMRPVATTLLMVAILLAGII, LMMAIALVVMIIYLFLRNIPA, IIPGVAVPLSLIGTFAVMVFL, LTLMALTIATGFVVDDAIVVI, IGFTIISLIFSLIAVLIPLLF, FAITLAVAILISAVVSLTLTP, WLTLSVALSTLLLSVLLWVFI, LGSTVWLIVAAVVAMYIVLGI, FIHPITILSTLPTAGVGALLA, IAGSELDVIAIIGIILLIGIV, ILMTTLAALLGALPLMLSTGV, and IGMVGGLIVSQVLTLFTTPVI.

The protein belongs to the resistance-nodulation-cell division (RND) (TC 2.A.6) family. MdtB subfamily. Part of a tripartite efflux system composed of MdtA, MdtB and MdtC. MdtB forms a heteromultimer with MdtC.

The protein localises to the cell inner membrane. In Shigella boydii serotype 4 (strain Sb227), this protein is Multidrug resistance protein MdtB.